A 246-amino-acid polypeptide reads, in one-letter code: MWIGVISLFPEMFRAITDYGVTGRAVKNGLLSVQCWSPRDFTYDRHRTVDDRPYGGGPGMLMMVQPLREAIHAAKAAAGEGAKVIYLSPQGRKLDQQGVCELAMNQKMILVCGRYEGVDERVIKTEIDEEWSIGDYVLSGGELPAMTLIDSVSRFIPGVLGHHASAEEDSFVDGLLDCPHYTRPEVLEGMEVPPVLLSGNHAEIRRWRLKQSLGRTWLRRPELLESLALTDEQMVLLAEFQREHKP.

Residues G113 and 133–138 (IGDYVL) contribute to the S-adenosyl-L-methionine site.

Belongs to the RNA methyltransferase TrmD family. In terms of assembly, homodimer.

The protein localises to the cytoplasm. It catalyses the reaction guanosine(37) in tRNA + S-adenosyl-L-methionine = N(1)-methylguanosine(37) in tRNA + S-adenosyl-L-homocysteine + H(+). In terms of biological role, specifically methylates guanosine-37 in various tRNAs. The sequence is that of tRNA (guanine-N(1)-)-methyltransferase from Yersinia pseudotuberculosis serotype O:1b (strain IP 31758).